Reading from the N-terminus, the 303-residue chain is Eukaryotic translation initiation factor 3 subunit F (303 aa).

The span at 1 to 10 (MSLDTSSSAI) shows a compositional bias: polar residues. The segment at 1 to 25 (MSLDTSSSAIHLQLPPTSSSLRPPS) is disordered. A compositionally biased stretch (low complexity) spans 12–25 (LQLPPTSSSLRPPS). Residues 27–165 (ITVHPSVIAQ…VKGWVSQPLG (139 aa)) form the MPN domain.

This sequence belongs to the eIF-3 subunit F family. Component of the eukaryotic translation initiation factor 3 (eIF-3) complex.

It localises to the cytoplasm. Component of the eukaryotic translation initiation factor 3 (eIF-3) complex, which is involved in protein synthesis of a specialized repertoire of mRNAs and, together with other initiation factors, stimulates binding of mRNA and methionyl-tRNAi to the 40S ribosome. The eIF-3 complex specifically targets and initiates translation of a subset of mRNAs involved in cell proliferation. In Cryptococcus neoformans var. neoformans serotype D (strain B-3501A) (Filobasidiella neoformans), this protein is Eukaryotic translation initiation factor 3 subunit F.